A 252-amino-acid chain; its full sequence is 3-dehydroquinate dehydratase (252 aa).

3-dehydroquinate is bound by residues 46–48 (EWR) and Arg-82. The active-site Proton donor/acceptor is the His-143. Lys-170 acts as the Schiff-base intermediate with substrate in catalysis. Residues Arg-212, Ser-231, and Gln-235 each coordinate 3-dehydroquinate.

The protein belongs to the type-I 3-dehydroquinase family. As to quaternary structure, homodimer.

It catalyses the reaction 3-dehydroquinate = 3-dehydroshikimate + H2O. It participates in metabolic intermediate biosynthesis; chorismate biosynthesis; chorismate from D-erythrose 4-phosphate and phosphoenolpyruvate: step 3/7. In terms of biological role, involved in the third step of the chorismate pathway, which leads to the biosynthesis of aromatic amino acids. Catalyzes the cis-dehydration of 3-dehydroquinate (DHQ) and introduces the first double bond of the aromatic ring to yield 3-dehydroshikimate. The polypeptide is 3-dehydroquinate dehydratase (Listeria monocytogenes serotype 4b (strain CLIP80459)).